A 310-amino-acid chain; its full sequence is Protein TIFY 6A (310 aa).

Residues 141–176 (SKPLPPQLTIFYAGSVLVYQDIAPEKAQAIMLLAGN) enclose the Tify domain. A Jas motif is present at residues 259–284 (PQTRKASLARFLEKRKERVINVSPYY). Residues 261-268 (TRKASLAR) carry the Nuclear localization signal motif.

The protein belongs to the TIFY/JAZ family. As to quaternary structure, homo- and heterodimer. Interacts with MYC2, AFPH2/NINJA, TIFY10A/JAZ1, TIFY6B/JAZ3, TIFY5A/JAZ8, TIFY9/JAZ10 and TIFY3A/JAZ11. Interacts with RHD6 and RSL1. Post-translationally, ubiquitinated. Targeted for degradation by the SCF(COI1) E3 ubiquitin ligase-proteasome pathway during jasmonate signaling.

The protein localises to the nucleus. In terms of biological role, repressor of jasmonate responses. Interacts with and suppresses RHD6 and RSL1 transcription factor activities to negatively regulate jasmonate-stimulated root hair development. The polypeptide is Protein TIFY 6A (TIFY6A) (Arabidopsis thaliana (Mouse-ear cress)).